The chain runs to 231 residues: 2,3-bisphosphoglycerate-dependent phosphoglycerate mutase (231 aa).

Residues 10-17 (RHGQSEWN), 23-24 (TG), arginine 62, 89-92 (ERHY), lysine 100, 116-117 (RR), and 185-186 (GN) contribute to the substrate site. Histidine 11 functions as the Tele-phosphohistidine intermediate in the catalytic mechanism. Glutamate 89 functions as the Proton donor/acceptor in the catalytic mechanism.

This sequence belongs to the phosphoglycerate mutase family. BPG-dependent PGAM subfamily. Homodimer.

The enzyme catalyses (2R)-2-phosphoglycerate = (2R)-3-phosphoglycerate. The protein operates within carbohydrate degradation; glycolysis; pyruvate from D-glyceraldehyde 3-phosphate: step 3/5. In terms of biological role, catalyzes the interconversion of 2-phosphoglycerate and 3-phosphoglycerate. This chain is 2,3-bisphosphoglycerate-dependent phosphoglycerate mutase, found in Buchnera aphidicola subsp. Acyrthosiphon pisum (strain APS) (Acyrthosiphon pisum symbiotic bacterium).